Reading from the N-terminus, the 142-residue chain is Small heat shock protein IbpB (142 aa).

Positions 26-137 constitute a sHSP domain; sequence AGESQSFPPY…APQRIAISER (112 aa).

The protein belongs to the small heat shock protein (HSP20) family. Homodimer. Forms homomultimers of about 100-150 subunits at optimal growth temperatures. Conformation changes to oligomers at high temperatures or high ionic concentrations. The decrease in size of the multimers is accompanied by an increase in chaperone activity.

The protein localises to the cytoplasm. In terms of biological role, associates with aggregated proteins, together with IbpA, to stabilize and protect them from irreversible denaturation and extensive proteolysis during heat shock and oxidative stress. Aggregated proteins bound to the IbpAB complex are more efficiently refolded and reactivated by the ATP-dependent chaperone systems ClpB and DnaK/DnaJ/GrpE. Its activity is ATP-independent. This Klebsiella pneumoniae subsp. pneumoniae (strain ATCC 700721 / MGH 78578) protein is Small heat shock protein IbpB.